A 153-amino-acid polypeptide reads, in one-letter code: GVQKTETQAISPVPAEKLFKGSFLDMDTVVPKAFPEGIKSVQVLEGNGGVGTIKNVTLGDATPFNTMKTRIDAIDEHAFTYTYTIIGGDILLDIIESIENHFKIVPTDGGSTITQTTIYNTIGDAVIPEENIKDATDKSIQLFKAVEAYLLAN.

Belongs to the BetVI family.

It is found in the cytoplasm. Functionally, catalyzes the two-stage endonucleolytic cleavage to 3'-phosphomononucleotides and 3'-phosphooligonucleotides with 2',3'-cyclic phosphate intermediates. This chain is Ribonuclease 2, found in Panax ginseng (Korean ginseng).